The primary structure comprises 334 residues: Small ribosomal subunit protein RACK1z (334 aa).

WD repeat units lie at residues 16–47 (GHNDVVTAIATPIDNSPFIVSSSRDKSLLVWD), 73–103 (GHSHFVQDVVLSSDGQFALSGSWDGELRLWD), 115–145 (GHDKDVLSVAFSVDNRQIVSASRDRTIKLWN), 163–195 (GHNGWVSCVRFSPNTFQPTIVSGSWDRTVKVWN), 207–237 (GHGGYVNAVAVSPDGSLCASGGKDGVTLLWD), 248–277 (DAGSIIHSLCFSPNRYWLCAATQDSIKIWD), and 296–326 (NQMLYCTSLNWSADGSTLYAGYTDGTIRIYK).

This sequence belongs to the WD repeat G protein beta family. Ribosomal protein RACK1 subfamily. In terms of assembly, interacts with RAC1, RAC3, RAC6, RAR1, SGT1 and RBOHB. Homodimer and heterodimer with RACK1B. In terms of tissue distribution, widely expressed.

Its subcellular location is the cytoplasm. The protein localises to the cell membrane. Its function is as follows. Component of the RACK1 regulatory proteins that functions in innate immunity by interacting with multiple proteins in the RAC1 immune complex. Acts as a positive regulator of reactive oxygen species (ROS) production and is required for resistance against rice blast (M.grisea) infection. The protein is Small ribosomal subunit protein RACK1z (RACK1A) of Oryza sativa subsp. japonica (Rice).